Consider the following 806-residue polypeptide: MYNHNKIEKKWQKYWLDNKTFKFVDNPNNPKKFYVLDMFPYPSGKGLHVGHPKGYTATDVISRFKRLNGYDVLHPIGWDAFGLPAEQYALETNNHPHTFTQQNIKIFRKQLQMIGFDFDYDKEVDTTDPQFYQWTQWIFVQLYKHNLAEIQDIDVNWCENLGTVLSNEEVVLNDKNERVSERGGHPVVRKPMKQWVLKIVDYADKLLDGLNEVEFSESLKSLQRNWIGKSIGTSVQFKIKDSLLTLDVFTTRIDTIYGVQYLVVAPEHPILKSITSEQQINVVQSYIEQTKKISDLDRIADTNKTGVFSGAYAINPINQEIIPIWVSDYVLMNFATGAVMGVPAHDERDYAFAKKYALPIKSVIDTKQKLPYAGDGLHINSAMINGLNIKQSQNVLNDYLIKNHLGKKVANYKLRNWIFSRQRYWGEPFPVLFDENNQIKIIEDLPVLLPNLNEFKPSKTGESPLANAQEWLYVEIDGKKYRRETNTMPQWAGSSWYFLAYILKNEDGSYTPLNSEEAKKRFAKWLPVDVYIGGQEHAVLHLLYSRFWHRFLYDIGVVPTKEPFYKVINQGMILGENNEKMSKSKGNVINPDDIIASHGADTLRIYEMFMGPLTASLPWNPDGLDAMRKWLDRVYRLYHNLSELEVVEDLNKLNEEIIIAYHTLIKNYTKAINEQAFNIAISEMMVFVNVLYKNKVINYELLDNFLILLSCYAPHLAEELYSLNHSESVCLQKMPIYDEQKIIAQNITIPIQINGKLKHTINVLRDTNAEELVNLALACEQVKQEIGDQPIKKQIVVVNKIINFVI.

The 'HIGH' region motif lies at 40–51; sequence PYPSGKGLHVGH. The 'KMSKS' region motif lies at 580–584; it reads KMSKS. K583 is an ATP binding site.

It belongs to the class-I aminoacyl-tRNA synthetase family.

It is found in the cytoplasm. It catalyses the reaction tRNA(Leu) + L-leucine + ATP = L-leucyl-tRNA(Leu) + AMP + diphosphate. In Ureaplasma parvum serovar 3 (strain ATCC 27815 / 27 / NCTC 11736), this protein is Leucine--tRNA ligase.